The sequence spans 368 residues: MSTILEKISAIESEMARTQKNKATSAHLGLLKAKLAKLRRELISPKGGGGGTGEAGFEVAKTGDARVGFVGFPSVGKSTLLSNLAGVYSEVAAYEFTTLTTVPGCIKYKGAKIQLLDLPGIIEGAKDGKGRGRQVIAVARTCNLIFMVLDCLKPLGHKKLLEHELEGFGIRLNKKPPNIYYKRKDKGGINLNSMVPQSELDTDLVKTILSEYKIHNADITLRYDATSDDLIDVIEGNRIYIPCIYLLNKIDQISIEELDVIYKIPHCVPISAHHHWNFDDLLELMWEYLRLQRIYTKPKGQLPDYNSPVVLHNERTSIEDFCNKLHRSIAKEFKYALVWGSSVKHQPQKVGIEHVLNDEDVVQIVKKV.

Residue Lys22 is modified to (3S)-3-hydroxylysine. The OBG-type G domain maps to 65 to 290 (ARVGFVGFPS…LLELMWEYLR (226 aa)). Residues 71 to 78 (GFPSVGKS), 117 to 121 (DLPGI), and 248 to 251 (NKID) each bind GTP. In terms of domain architecture, TGS spans 290–366 (RLQRIYTKPK…NDEDVVQIVK (77 aa)).

It belongs to the TRAFAC class OBG-HflX-like GTPase superfamily. OBG GTPase family. In terms of processing, hydroxylated (with S stereochemistry) at C-3 of Lys-22 by JMJD7. Expressed in posterior-lateral epidermis of the maxillary lobe.

In terms of biological role, catalyzes the conversion of GTP to GDP through hydrolysis of the gamma-phosphate bond in GTP. Dfd/deformed is required to activate 128up in maxillary segment cells. The sequence is that of Guanylate binding protein 128up from Drosophila melanogaster (Fruit fly).